We begin with the raw amino-acid sequence, 933 residues long: Phospholipase SGR2 (933 aa).

Basic and acidic residues predominate over residues 1–14; that stretch reads MEDRETHLGTREVN. Positions 1–22 are disordered; it reads MEDRETHLGTREVNETSPDLLK. Residue serine 444 is part of the active site. Disordered stretches follow at residues 475-517 and 553-598; these read PDEE…GQDN and RGGQ…ESVN. The span at 505–517 shows a compositional bias: polar residues; sequence QLNNPEKITGQDN. Residues 553 to 563 show a composition bias toward basic and acidic residues; sequence RGGQEDDHHDS. Residues 593–631 are a coiled coil; it reads DKESVNSNNEERIKLLQDEVNSLRSKVAQLLSENARILS. Residues 669–868 form the DDHD domain; it reads LEFKVDTFFA…ALFIIKHLYR (200 aa). The disordered stretch occupies residues 871-903; sequence PDGPNSPTESTEGDDSPKDSSRPHSWIDRREAD. Positions 885–902 are enriched in basic and acidic residues; it reads DSPKDSSRPHSWIDRREA.

As to quaternary structure, forms oligomers. As to expression, expressed in roots, hypocotyls, leaves, stems and floral buds, and, at low levels, in siliques.

The protein resides in the vacuole membrane. Its function is as follows. Involved in vacuolar formation or function (e.g. formation of vacuolar membrane 'bulbs'). Required for amyloplast sedimentation in the endodermis during shoot gravitropism, which are thus acting as statoliths. Particularly important for the negative gravitropism leading to leaf movement observed in darkness. The polypeptide is Phospholipase SGR2 (SGR2) (Arabidopsis thaliana (Mouse-ear cress)).